The sequence spans 785 residues: 5-methyltetrahydropteroyltriglutamate--homocysteine methyltransferase (785 aa).

5-methyltetrahydropteroyltri-L-glutamate-binding positions include 15 to 18 (RELK) and K121. L-homocysteine contacts are provided by residues 460–462 (IGS) and E513. L-methionine contacts are provided by residues 460–462 (IGS) and E513. 5-methyltetrahydropteroyltri-L-glutamate is bound by residues 544–545 (RC) and W590. D628 lines the L-homocysteine pocket. D628 provides a ligand contact to L-methionine. E634 provides a ligand contact to 5-methyltetrahydropteroyltri-L-glutamate. Zn(2+)-binding residues include H670, C672, and E694. H723 serves as the catalytic Proton donor. C755 serves as a coordination point for Zn(2+).

This sequence belongs to the vitamin-B12 independent methionine synthase family. The cofactor is Zn(2+).

It carries out the reaction 5-methyltetrahydropteroyltri-L-glutamate + L-homocysteine = tetrahydropteroyltri-L-glutamate + L-methionine. It functions in the pathway amino-acid biosynthesis; L-methionine biosynthesis via de novo pathway; L-methionine from L-homocysteine (MetE route): step 1/1. Functionally, catalyzes the transfer of a methyl group from 5-methyltetrahydrofolate to homocysteine resulting in methionine formation. The protein is 5-methyltetrahydropteroyltriglutamate--homocysteine methyltransferase of Nitratidesulfovibrio vulgaris (strain ATCC 29579 / DSM 644 / CCUG 34227 / NCIMB 8303 / VKM B-1760 / Hildenborough) (Desulfovibrio vulgaris).